A 133-amino-acid polypeptide reads, in one-letter code: MLSDPIADMLTRIRNATRTHKETVDVPASNFKEQLANLLVAEGYVAGVERTRLDGQPADVLRLTLKYGAKREQVIKHIERISRPGRRAYVSAENLPRIQRGMGVAVVSTSKGLLPDREARKLGVGGEVICVLW.

This sequence belongs to the universal ribosomal protein uS8 family. In terms of assembly, part of the 30S ribosomal subunit. Contacts proteins S5 and S12.

In terms of biological role, one of the primary rRNA binding proteins, it binds directly to 16S rRNA central domain where it helps coordinate assembly of the platform of the 30S subunit. The polypeptide is Small ribosomal subunit protein uS8 (Deinococcus deserti (strain DSM 17065 / CIP 109153 / LMG 22923 / VCD115)).